Reading from the N-terminus, the 182-residue chain is Nuclear cap-binding protein subunit 2 (182 aa).

MRNA contacts are provided by residues Y13, Y35, 104–108 (RADLD), 115–119 (RQYGR), and 125–126 (QV). Residues 32-110 (NCVYVGNLSF…RIIRADLDHG (79 aa)) enclose the RRM domain. The tract at residues 114 to 182 (GRQYGRGASG…NPRYNRWKKN (69 aa)) is disordered. A compositionally biased stretch (basic and acidic residues) spans 126–136 (VRDEMREEFDP). The span at 145 to 175 (RQPTSSRQLANYSGISSAPLGSSLELQSNPR) shows a compositional bias: polar residues.

It belongs to the RRM NCBP2 family. Component of the nuclear cap-binding complex (CBC), a heterodimer composed of cbc1 and cbc2 that interacts with capped RNAs.

It localises to the cytoplasm. The protein localises to the perinuclear region. Its subcellular location is the nucleus. Its function is as follows. Component of the CBC complex, which binds co-transcriptionally to the 5' cap of pre-mRNAs and is involved in maturation, export and degradation of nuclear mRNAs. The chain is Nuclear cap-binding protein subunit 2 (cbc2) from Schizosaccharomyces pombe (strain 972 / ATCC 24843) (Fission yeast).